Here is a 163-residue protein sequence, read N- to C-terminus: Beta-carbonic anhydrase 1 (163 aa).

Residues cysteine 35, aspartate 37, histidine 88, and cysteine 91 each contribute to the Zn(2+) site.

This sequence belongs to the beta-class carbonic anhydrase family. As to quaternary structure, homotetramer. Requires Zn(2+) as cofactor.

The enzyme catalyses hydrogencarbonate + H(+) = CO2 + H2O. In terms of biological role, catalyzes the reversible hydration of carbon dioxide to form bicarbonate. The sequence is that of Beta-carbonic anhydrase 1 from Mycobacterium bovis (strain ATCC BAA-935 / AF2122/97).